Reading from the N-terminus, the 429-residue chain is Tol-Pal system protein TolB (429 aa).

The first 21 residues, 1–21, serve as a signal peptide directing secretion; sequence MKPVFKMLLSLLILWTSLLHA.

It belongs to the TolB family. As to quaternary structure, the Tol-Pal system is composed of five core proteins: the inner membrane proteins TolA, TolQ and TolR, the periplasmic protein TolB and the outer membrane protein Pal. They form a network linking the inner and outer membranes and the peptidoglycan layer.

Its subcellular location is the periplasm. In terms of biological role, part of the Tol-Pal system, which plays a role in outer membrane invagination during cell division and is important for maintaining outer membrane integrity. TolB occupies a key intermediary position in the Tol-Pal system because it communicates directly with both membrane-embedded components, Pal in the outer membrane and TolA in the inner membrane. This chain is Tol-Pal system protein TolB, found in Hamiltonella defensa subsp. Acyrthosiphon pisum (strain 5AT).